The sequence spans 503 residues: Probable cytosol aminopeptidase (503 aa).

Mn(2+) is bound by residues lysine 270 and aspartate 275. Lysine 282 is a catalytic residue. The Mn(2+) site is built by aspartate 293, aspartate 352, and glutamate 354. Arginine 356 is a catalytic residue.

The protein belongs to the peptidase M17 family. The cofactor is Mn(2+).

It localises to the cytoplasm. The catalysed reaction is Release of an N-terminal amino acid, Xaa-|-Yaa-, in which Xaa is preferably Leu, but may be other amino acids including Pro although not Arg or Lys, and Yaa may be Pro. Amino acid amides and methyl esters are also readily hydrolyzed, but rates on arylamides are exceedingly low.. It carries out the reaction Release of an N-terminal amino acid, preferentially leucine, but not glutamic or aspartic acids.. Presumably involved in the processing and regular turnover of intracellular proteins. Catalyzes the removal of unsubstituted N-terminal amino acids from various peptides. The polypeptide is Probable cytosol aminopeptidase (Pectobacterium atrosepticum (strain SCRI 1043 / ATCC BAA-672) (Erwinia carotovora subsp. atroseptica)).